The chain runs to 357 residues: sn-glycerol-3-phosphate import ATP-binding protein UgpC (357 aa).

The ABC transporter domain occupies 4–235 (LKLQAVTKSY…PASLFVASFI (232 aa)). 37–44 (GPSGCGKS) lines the ATP pocket.

This sequence belongs to the ABC transporter superfamily. sn-glycerol-3-phosphate importer (TC 3.A.1.1.3) family. As to quaternary structure, the complex is composed of two ATP-binding proteins (UgpC), two transmembrane proteins (UgpA and UgpE) and a solute-binding protein (UgpB).

Its subcellular location is the cell inner membrane. The enzyme catalyses sn-glycerol 3-phosphate(out) + ATP + H2O = sn-glycerol 3-phosphate(in) + ADP + phosphate + H(+). In terms of biological role, part of the ABC transporter complex UgpBAEC involved in sn-glycerol-3-phosphate (G3P) import. Responsible for energy coupling to the transport system. In Yersinia pestis bv. Antiqua (strain Antiqua), this protein is sn-glycerol-3-phosphate import ATP-binding protein UgpC.